The chain runs to 323 residues: Methionine adenosyltransferase 2 subunit beta (323 aa).

NADP(+) contacts are provided by residues 26-29 (TGLL), 49-51 (YNR), 60-61 (NL), cysteine 82, arginine 86, tyrosine 146, and leucine 172. The segment at 308–323 (LWPFQHDKRWRQTVFH) is required for interaction with MAT2A.

It belongs to the dTDP-4-dehydrorhamnose reductase family. MAT2B subfamily. As to quaternary structure, heterotrimer; composed of a catalytic mat2a homodimer that binds one regulatory mat2b chain. Heterohexamer; composed of a central, catalytic mat2a homotetramer flanked on either side by a regulatory mat2b chain. NADP binding increases the affinity for mat2a.

It functions in the pathway amino-acid biosynthesis; S-adenosyl-L-methionine biosynthesis; S-adenosyl-L-methionine from L-methionine: step 1/1. In terms of biological role, regulatory subunit of S-adenosylmethionine synthetase 2, an enzyme that catalyzes the formation of S-adenosylmethionine from methionine and ATP. Regulates MAT2A catalytic activity by changing its kinetic properties, increasing its affinity for L-methionine. Can bind NADP (in vitro). The sequence is that of Methionine adenosyltransferase 2 subunit beta (mat2b) from Danio rerio (Zebrafish).